A 634-amino-acid polypeptide reads, in one-letter code: Chaperone protein HtpG (634 aa).

The a; substrate-binding stretch occupies residues 1-342; it reads MTVETDKQTL…SSDLSLNVSR (342 aa). The tract at residues 343-559 is b; it reads EILQSGPVVD…QGDLGLQMRQ (217 aa). The c stretch occupies residues 560 to 634; the sequence is LLEASGQAVP…LNKLLLELSV (75 aa).

The protein belongs to the heat shock protein 90 family. In terms of assembly, homodimer.

Its subcellular location is the cytoplasm. Functionally, molecular chaperone. Has ATPase activity. The sequence is that of Chaperone protein HtpG from Xanthomonas euvesicatoria pv. vesicatoria (strain 85-10) (Xanthomonas campestris pv. vesicatoria).